A 563-amino-acid polypeptide reads, in one-letter code: TSET complex member tstC (563 aa).

Disordered regions lie at residues 146–170 (SPHQPPHYNTHHHTSTPSVAPSFIT), 192–213 (NSLSNSISNSNSNNNNNNNNDS), 235–298 (VLNS…NYNN), 376–395 (HPNAGKEAKEKEKEKENEFK), and 428–563 (GSAS…FLNF). Over residues 379–395 (AGKEAKEKEKEKENEFK) the composition is skewed to basic and acidic residues. Residues 428-459 (GSASSKSSPSTSPLSSSYNPSSPETSENSFSA) show a composition bias toward low complexity. Over residues 460–473 (TPISDSNSLKNSID) the composition is skewed to polar residues. Composition is skewed to low complexity over residues 474–487 (NNNNNNNNNNNNNN) and 507–543 (NNSKSSLSTSNSNISTPDNGASSPLASSTSGSASSAA). Over residues 552 to 563 (NSAKTKMNFLNF) the composition is skewed to polar residues.

As to quaternary structure, component of the TSET complex, a heterohexamer composed of tstA, tstB, tstC, tstD, tstE and tstF, which may act in plasma membrane turnover. tstA, tstB, tstC and tstD are likely to be the core complex members with tstE and tstF acting as associated scaffold proteins.

This Dictyostelium discoideum (Social amoeba) protein is TSET complex member tstC.